The chain runs to 86 residues: Exodeoxyribonuclease 7 small subunit (86 aa).

The tract at residues 67–86 is disordered; the sequence is LSDPAQPEASEPFDPPSHDG.

This sequence belongs to the XseB family. In terms of assembly, heterooligomer composed of large and small subunits.

Its subcellular location is the cytoplasm. The catalysed reaction is Exonucleolytic cleavage in either 5'- to 3'- or 3'- to 5'-direction to yield nucleoside 5'-phosphates.. Its function is as follows. Bidirectionally degrades single-stranded DNA into large acid-insoluble oligonucleotides, which are then degraded further into small acid-soluble oligonucleotides. The sequence is that of Exodeoxyribonuclease 7 small subunit from Stenotrophomonas maltophilia (strain K279a).